A 457-amino-acid polypeptide reads, in one-letter code: Nuclear hormone receptor family member odr-7 (457 aa).

2 disordered regions span residues 57–95 (EQPN…DNDA) and 230–252 (KQES…LQQP). Residues 327–407 (LHDCQVCLST…IGMLPENVQH (81 aa)) constitute a DNA-binding region (nuclear receptor). 2 NR C4-type zinc fingers span residues 330-351 (CQVC…CAAC) and 367-395 (CKRN…MKRC). A disordered region spans residues 435–457 (QPSGSAAQPITVSSSESPRHTTN).

The protein belongs to the nuclear hormone receptor family. NR0 subfamily. As to quaternary structure, heterodimer with a partner that confers DNA binding capacity or a nuclear hormone receptor whose DNA binding it inhibits. As to expression, expressed predominantly in the AWA neurons.

It is found in the nucleus. The protein resides in the cytoplasm. The protein localises to the perinuclear region. Required for the function of one pair of chemosensory neurons called AWA neurons that are involved in chemotaxis to volatile odorants. Acts in a pathway that specifies olfactory neuronal fate. Regulates the transcription of olfactory signaling molecules such as odr-10 that specify AWA neuron identity and function. Represses the expression in AWA neurons of factors such as str-2 which specify AWC neuron identity. The polypeptide is Nuclear hormone receptor family member odr-7 (odr-7) (Caenorhabditis elegans).